The following is a 153-amino-acid chain: Pheromone-binding protein Gp-9 (153 aa).

Positions 1–19 are cleaved as a signal peptide; sequence MKTFVLHIFIFALVAFASA. 3 cysteine pairs are disulfide-bonded: cysteine 37–cysteine 77, cysteine 73–cysteine 129, and cysteine 118–cysteine 138.

This sequence belongs to the PBP/GOBP family. As to quaternary structure, homodimer.

Its subcellular location is the secreted. Its function is as follows. Colony queen number, a major feature of social organization, is associated with worker genotype for Gp-9. Colonies are headed by either a single reproductive queen (monogyne form) or multiple queens (polygyne form). Differences in worker Gp-9 genotypes between social forms may cause differences in workers' abilities to recognize queens and regulate their numbers. The sequence is that of Pheromone-binding protein Gp-9 from Solenopsis daguerrei (Workerless parasitic ant).